The following is an 848-amino-acid chain: Adenylate cyclase (848 aa).

Positions methionine 1 to leucine 535 are catalytic. The segment at lysine 541–serine 848 is regulatory. Position 609 is a phosphohistidine; by CRR (histidine 609).

The protein belongs to the adenylyl cyclase class-1 family.

It is found in the cytoplasm. It catalyses the reaction ATP = 3',5'-cyclic AMP + diphosphate. This Salmonella typhi protein is Adenylate cyclase (cyaA).